A 305-amino-acid chain; its full sequence is Putative S-adenosyl-L-methionine-dependent methyltransferase MAB_3787 (305 aa).

Residues Asp-132 and 161 to 162 (DL) contribute to the S-adenosyl-L-methionine site.

It belongs to the UPF0677 family.

Functionally, exhibits S-adenosyl-L-methionine-dependent methyltransferase activity. The protein is Putative S-adenosyl-L-methionine-dependent methyltransferase MAB_3787 of Mycobacteroides abscessus (strain ATCC 19977 / DSM 44196 / CCUG 20993 / CIP 104536 / JCM 13569 / NCTC 13031 / TMC 1543 / L948) (Mycobacterium abscessus).